A 203-amino-acid chain; its full sequence is Probable nicotinate-nucleotide adenylyltransferase (203 aa).

Belongs to the NadD family.

The catalysed reaction is nicotinate beta-D-ribonucleotide + ATP + H(+) = deamido-NAD(+) + diphosphate. The protein operates within cofactor biosynthesis; NAD(+) biosynthesis; deamido-NAD(+) from nicotinate D-ribonucleotide: step 1/1. Functionally, catalyzes the reversible adenylation of nicotinate mononucleotide (NaMN) to nicotinic acid adenine dinucleotide (NaAD). The chain is Probable nicotinate-nucleotide adenylyltransferase from Dictyoglomus turgidum (strain DSM 6724 / Z-1310).